Reading from the N-terminus, the 346-residue chain is Nicotinate-nucleotide--dimethylbenzimidazole phosphoribosyltransferase (346 aa).

Catalysis depends on Glu-312, which acts as the Proton acceptor.

It belongs to the CobT family.

The enzyme catalyses 5,6-dimethylbenzimidazole + nicotinate beta-D-ribonucleotide = alpha-ribazole 5'-phosphate + nicotinate + H(+). It functions in the pathway nucleoside biosynthesis; alpha-ribazole biosynthesis; alpha-ribazole from 5,6-dimethylbenzimidazole: step 1/2. In terms of biological role, catalyzes the synthesis of alpha-ribazole-5'-phosphate from nicotinate mononucleotide (NAMN) and 5,6-dimethylbenzimidazole (DMB). This Cupriavidus necator (strain ATCC 17699 / DSM 428 / KCTC 22496 / NCIMB 10442 / H16 / Stanier 337) (Ralstonia eutropha) protein is Nicotinate-nucleotide--dimethylbenzimidazole phosphoribosyltransferase.